The chain runs to 403 residues: MYRDPEAASPGAPTRDVLLVSAIITVSLSVTIVLCGLCHWCQRKLGKRYKNSLETVGTPDSGRGRGEKKAIKLPAGGKAVNTAPVPGQTPHDESDRRTETRSSVSDLVNSLTSEMLMLSPGSEEDEAHEGCSRENLGRIQFSVGYNFQESTLTVKVMKAQELPAKDFSGTSDPFVKIYLLPDKKHKLETKVKRKNLNPHWNETFLFEGFPYEKVVQRVLYLQVLDYDRFSRNDPIGEVSIPLNKVDLTQMQTFWKDLKPCSDGSGSRGELLLSLCYNPSANSIIVNIIKARNLKAMDIGGTSDPYVKVWLMYKDKRVEKKKTVTKKRNLNPIFNESFAFDIPTEKLRETTIIITVMDKDKLSRNDVIGKIYLSWKSGPGEVKHWKDMIARPRQPVAQWHQLKA.

Residues 1-16 (MYRDPEAASPGAPTRD) are Vesicular-facing. A helical membrane pass occupies residues 17-37 (VLLVSAIITVSLSVTIVLCGL). Topologically, residues 38 to 403 (CHWCQRKLGK…PVAQWHQLKA (366 aa)) are cytoplasmic. Serine 52 is subject to Phosphoserine. Residues 53 to 103 (LETVGTPDSGRGRGEKKAIKLPAGGKAVNTAPVPGQTPHDESDRRTETRSS) are disordered. At threonine 58 the chain carries Phosphothreonine. Serine 61 bears the Phosphoserine mark. Basic and acidic residues predominate over residues 90 to 100 (PHDESDRRTET). Phosphoserine occurs at positions 119 and 122. 2 consecutive C2 domains span residues 135–255 (NLGR…TFWK) and 266–399 (SRGE…AQWH). Aspartate 166 contacts Ca(2+). Glycine 169 and serine 171 each carry asymmetric dimethylarginine. Ca(2+) contacts are provided by aspartate 172, aspartate 225, aspartate 227, serine 230, aspartate 233, aspartate 297, aspartate 303, aspartate 357, aspartate 359, serine 362, and aspartate 365.

It belongs to the synaptotagmin family. As to quaternary structure, homodimer. Can also form heterodimers with SYT6, SYT9 and SYT10. Interacts with calmodulin (CALM1, CALM2 or CALM3). Interacts with CD63; required for localization to lysosomes. Interacts with APP. Requires Ca(2+) as cofactor. In terms of processing, palmitoylated at its vesicular N-terminus; palmitoylation is required for localization to lysosome and phagocytosis in macrophages. As to expression, widely expressed. Expressed in insulin-secreting cells. Present in glucagon-secreting cells (at protein level).

Its subcellular location is the cell membrane. The protein resides in the presynaptic cell membrane. The protein localises to the cytoplasmic vesicle. It is found in the secretory vesicle. It localises to the synaptic vesicle membrane. Its subcellular location is the lysosome membrane. The protein resides in the phagosome membrane. The protein localises to the peroxisome membrane. It is found in the secretory vesicle membrane. Ca(2+) sensor involved in Ca(2+)-dependent exocytosis of secretory and synaptic vesicles through Ca(2+) and phospholipid binding to the C2 domain. Ca(2+) induces binding of the C2-domains to phospholipid membranes and to assembled SNARE-complexes; both actions contribute to triggering exocytosis. SYT7 binds Ca(2+) with high affinity and slow kinetics compared to other synaptotagmins. Involved in Ca(2+)-triggered lysosomal exocytosis, a major component of the plasma membrane repair. Ca(2+)-regulated delivery of lysosomal membranes to the cell surface is also involved in the phagocytic uptake of particles by macrophages. Ca(2+)-triggered lysosomal exocytosis also plays a role in bone remodeling by regulating secretory pathways in osteoclasts and osteoblasts. Involved in cholesterol transport from lysosome to peroxisome by promoting membrane contacts between lysosomes and peroxisomes: probably acts by promoting vesicle fusion by binding phosphatidylinositol-4,5-bisphosphate on peroxisomal membranes. Acts as a key mediator of synaptic facilitation, a process also named short-term synaptic potentiation: synaptic facilitation takes place at synapses with a low initial release probability and is caused by influx of Ca(2+) into the axon terminal after spike generation, increasing the release probability of neurotransmitters. Probably mediates synaptic facilitation by directly increasing the probability of release. May also contribute to synaptic facilitation by regulating synaptic vesicle replenishment, a process required to ensure that synaptic vesicles are ready for the arrival of the next action potential: SYT7 is required for synaptic vesicle replenishment by acting as a sensor for Ca(2+) and by forming a complex with calmodulin. Also acts as a regulator of Ca(2+)-dependent insulin and glucagon secretion in beta-cells. Triggers exocytosis by promoting fusion pore opening and fusion pore expansion in chromaffin cells. Also regulates the secretion of some non-synaptic secretory granules of specialized cells. The chain is Synaptotagmin-7 from Mus musculus (Mouse).